Reading from the N-terminus, the 706-residue chain is D-(-)-3-hydroxybutyrate oligomer hydrolase (706 aa).

Residues 1 to 32 form the signal peptide; that stretch reads MTTTSKNCLTLTSIAAAVAAVLVLSACGGGSA. Serine 311 serves as the catalytic Charge relay system.

The protein belongs to the D-(-)-3-hydroxybutyrate oligomer hydrolase family.

It is found in the secreted. The enzyme catalyses (3R)-hydroxybutanoate dimer + H2O = 2 (R)-3-hydroxybutanoate + H(+). It participates in lipid metabolism; butanoate metabolism. Its function is as follows. Participates in the degradation of poly-3-hydroxybutyrate (PHB). It works downstream of poly(3-hydroxybutyrate) depolymerase, hydrolyzing D(-)-3-hydroxybutyrate oligomers of various length (3HB-oligomers) into 3HB-monomers. This is D-(-)-3-hydroxybutyrate oligomer hydrolase from Polaromonas sp. (strain JS666 / ATCC BAA-500).